A 394-amino-acid polypeptide reads, in one-letter code: Elongation factor Tu 1 (394 aa).

In terms of domain architecture, tr-type G spans 10–204; it reads KPHVNVGTIG…FLDSYIPEPE (195 aa). Residues 19-26 form a G1 region; that stretch reads GHVDHGKT. 19–26 is a binding site for GTP; the sequence is GHVDHGKT. Thr-26 provides a ligand contact to Mg(2+). The tract at residues 60–64 is G2; that stretch reads GITIN. The G3 stretch occupies residues 81 to 84; the sequence is DCPG. GTP is bound by residues 81-85 and 136-139; these read DCPGH and NKCD. The segment at 136 to 139 is G4; that stretch reads NKCD. Residues 174 to 176 are G5; that stretch reads SAL.

The protein belongs to the TRAFAC class translation factor GTPase superfamily. Classic translation factor GTPase family. EF-Tu/EF-1A subfamily. In terms of assembly, monomer.

It localises to the cytoplasm. The enzyme catalyses GTP + H2O = GDP + phosphate + H(+). Its function is as follows. GTP hydrolase that promotes the GTP-dependent binding of aminoacyl-tRNA to the A-site of ribosomes during protein biosynthesis. This is Elongation factor Tu 1 from Shigella flexneri serotype 5b (strain 8401).